Consider the following 179-residue polypeptide: Iron sulfur cluster assembly protein 1, mitochondrial (179 aa).

The interval 160 to 179 (RSVKQPTLGPEAAQAETIAT) is disordered.

The protein belongs to the NifU family. Component of the core Fe-S cluster (ISC) assembly machinery. It depends on [2Fe-2S] cluster as a cofactor.

Its subcellular location is the mitochondrion matrix. The protein operates within cofactor biosynthesis; iron-sulfur cluster biosynthesis. Its function is as follows. Scaffold protein for the de novo synthesis of iron-sulfur (Fe-S) clusters within mitochondria, which is required for maturation of both mitochondrial and cytoplasmic [2Fe-2S] and [4Fe-4S] proteins. First, a [2Fe-2S] cluster is transiently assembled on the scaffold protein ISU1. In a second step, the cluster is released from ISU1, transferred to a glutaredoxin, followed by the formation of mitochondrial [2Fe-2S] proteins, the synthesis of [4Fe-4S] clusters and their target-specific insertion into the recipient apoproteins. Cluster assembly on ISU1 depends on the function of the cysteine desulfurase complex NFS1-ISD11, which serves as the sulfur donor for cluster synthesis, the iron-binding protein frataxin as the putative iron donor, and the electron transfer chain comprised of ferredoxin reductase and ferredoxin, which receive their electrons from NADH. This chain is Iron sulfur cluster assembly protein 1, mitochondrial (ISU1), found in Debaryomyces hansenii (strain ATCC 36239 / CBS 767 / BCRC 21394 / JCM 1990 / NBRC 0083 / IGC 2968) (Yeast).